The chain runs to 142 residues: Ribosome maturation factor RimP (142 aa).

The protein belongs to the RimP family.

The protein localises to the cytoplasm. Required for maturation of 30S ribosomal subunits. The sequence is that of Ribosome maturation factor RimP from Wolinella succinogenes (strain ATCC 29543 / DSM 1740 / CCUG 13145 / JCM 31913 / LMG 7466 / NCTC 11488 / FDC 602W) (Vibrio succinogenes).